The following is a 552-amino-acid chain: Probable protein kinase UbiB (552 aa).

A helical transmembrane segment spans residues 22-42 (LLPANLPLAATLLLLPFKLFP). The Protein kinase domain maps to 118 to 498 (SFNIEPLASA…QQLARQRNRR (381 aa)). ATP-binding positions include 124-132 (LASASVAQV) and lysine 146. The active-site Proton acceptor is the aspartate 281. The next 2 membrane-spanning stretches (helical) occupy residues 501 to 521 (ITLL…GEGI) and 530 to 550 (FGDI…AWLL).

Belongs to the ABC1 family. UbiB subfamily.

The protein resides in the cell inner membrane. It participates in cofactor biosynthesis; ubiquinone biosynthesis [regulation]. In terms of biological role, is probably a protein kinase regulator of UbiI activity which is involved in aerobic coenzyme Q (ubiquinone) biosynthesis. The polypeptide is Probable protein kinase UbiB (Cellvibrio japonicus (strain Ueda107) (Pseudomonas fluorescens subsp. cellulosa)).